The following is a 283-amino-acid chain: Serine protease 57 (283 aa).

The N-terminal stretch at 1–31 is a signal peptide; sequence MGLGLRGWGRPLLTVATALMLPVKPPAGSWG. The 230-residue stretch at 34-263 folds into the Peptidase S1 domain; that stretch reads IIGGHEVTPH…FVAWIWDVVR (230 aa). A disulfide bridge links Cys-59 with Cys-75. Active-site charge relay system residues include His-74 and Asp-122. Asn-129 and Asn-189 each carry an N-linked (GlcNAc...) asparagine glycan. 3 disulfides stabilise this stretch: Cys-157–Cys-224, Cys-188–Cys-202, and Cys-214–Cys-239. Ser-218 serves as the catalytic Charge relay system.

Belongs to the peptidase S1 family. After cleavage of the signal peptide, the N-terminus is probably further processed by CTSC. Processing by CTSC is probably required for accumulation in cytoplasmic granules; in the absence of CTSC the protein does not accumulate. Post-translationally, N-glycosylated. In terms of tissue distribution, detected in peripheral blood neutrophil granulocytes, but not in other types of leukocytes. Detected in neutrophils and neutrophil precursors in bone marrow (at protein level). Detected in myeloblasts and promyelocytes in bone marrow.

The protein resides in the cytoplasmic granule lumen. It is found in the secreted. With respect to regulation, inhibited by SERPINA1, SERPINC1 and SERPING1. Functionally, serine protease that cleaves preferentially after Arg residues. Can also cleave after citrulline (deimidated arginine) and methylarginine residues. The chain is Serine protease 57 (PRSS57) from Homo sapiens (Human).